The primary structure comprises 476 residues: Probable periplasmic serine endoprotease DegP-like (476 aa).

An N-terminal signal peptide occupies residues Met1 to Ala27. Residues His116, Asp146, and Ser219 each act as charge relay system in the active site. Substrate-binding positions include Gly217–Ser219 and Leu274–Ile278. PDZ domains lie at Leu263–Gly354 and Glu360–Gly465.

The protein belongs to the peptidase S1C family.

It localises to the periplasm. The catalysed reaction is Acts on substrates that are at least partially unfolded. The cleavage site P1 residue is normally between a pair of hydrophobic residues, such as Val-|-Val.. Its function is as follows. Might be efficient in the degradation of transiently denatured and unfolded proteins which accumulate in the periplasm following stress conditions. The polypeptide is Probable periplasmic serine endoprotease DegP-like (mucD) (Pseudomonas fluorescens (strain ATCC BAA-477 / NRRL B-23932 / Pf-5)).